Consider the following 191-residue polypeptide: Protein GrpE (191 aa).

A disordered region spans residues 1-22; sequence MKDKHNQEHDHLSQEEPESCEK.

This sequence belongs to the GrpE family. Homodimer.

The protein resides in the cytoplasm. Its function is as follows. Participates actively in the response to hyperosmotic and heat shock by preventing the aggregation of stress-denatured proteins, in association with DnaK and GrpE. It is the nucleotide exchange factor for DnaK and may function as a thermosensor. Unfolded proteins bind initially to DnaJ; upon interaction with the DnaJ-bound protein, DnaK hydrolyzes its bound ATP, resulting in the formation of a stable complex. GrpE releases ADP from DnaK; ATP binding to DnaK triggers the release of the substrate protein, thus completing the reaction cycle. Several rounds of ATP-dependent interactions between DnaJ, DnaK and GrpE are required for fully efficient folding. This Helicobacter pylori (strain Shi470) protein is Protein GrpE.